We begin with the raw amino-acid sequence, 291 residues long: Tyrosine isonitrile desaturase (291 aa).

Fe cation contacts are provided by His-110, Asp-112, and His-259.

It belongs to the TfdA dioxygenase family. As to quaternary structure, homotrimer in solution. Fe(2+) is required as a cofactor.

It carries out the reaction (2S)-3-(4-hydroxyphenyl)-2-isocyanopropanoate + 2-oxoglutarate + O2 = (2E)-3-(4-hydroxyphenyl)-2-isocyanoprop-2-enoate + succinate + CO2 + H2O. Its function is as follows. Involved in the biosynthesis of paerucumarin, a cyclized isocyano derivative of tyrosine. Catalyzes the 2-oxoglutarate-dependent oxidation of tyrosine isonitrile. The polypeptide is Tyrosine isonitrile desaturase (Pseudomonas aeruginosa (strain ATCC 15692 / DSM 22644 / CIP 104116 / JCM 14847 / LMG 12228 / 1C / PRS 101 / PAO1)).